Here is a 302-residue protein sequence, read N- to C-terminus: Flavin-dependent thymidylate synthase (302 aa).

Residues 43–257 (GFVRVIDYMG…PFAYKAFEDY (215 aa)) enclose the ThyX domain. FAD-binding positions include Thr-89, 112–114 (RHR), and Glu-120. DUMP is bound by residues 109–112 (QWIR), 120–124 (EYSAR), and Arg-196. The ThyX motif signature appears at 112–122 (RHRTANVNEYS). FAD-binding positions include 212 to 214 (DLH) and His-218. Arg-223 provides a ligand contact to dUMP. Arg-223 serves as the catalytic Involved in ionization of N3 of dUMP, leading to its activation.

This sequence belongs to the thymidylate synthase ThyX family. In terms of assembly, homotetramer. Requires FAD as cofactor.

It carries out the reaction dUMP + (6R)-5,10-methylene-5,6,7,8-tetrahydrofolate + NADPH + H(+) = dTMP + (6S)-5,6,7,8-tetrahydrofolate + NADP(+). The protein operates within pyrimidine metabolism; dTTP biosynthesis. Functionally, catalyzes the reductive methylation of 2'-deoxyuridine-5'-monophosphate (dUMP) to 2'-deoxythymidine-5'-monophosphate (dTMP) while utilizing 5,10-methylenetetrahydrofolate (mTHF) as the methyl donor, and NADPH and FADH(2) as the reductant. This Ruegeria pomeroyi (strain ATCC 700808 / DSM 15171 / DSS-3) (Silicibacter pomeroyi) protein is Flavin-dependent thymidylate synthase.